A 505-amino-acid chain; its full sequence is Deoxyguanosinetriphosphate triphosphohydrolase (505 aa).

The region spanning 66–273 is the HD domain; the sequence is RLTHSMEVQQ…MEAADDISYC (208 aa).

Belongs to the dGTPase family. Type 1 subfamily. Homotetramer. It depends on Mg(2+) as a cofactor.

The catalysed reaction is dGTP + H2O = 2'-deoxyguanosine + triphosphate + H(+). DGTPase preferentially hydrolyzes dGTP over the other canonical NTPs. This is Deoxyguanosinetriphosphate triphosphohydrolase from Shigella boydii serotype 18 (strain CDC 3083-94 / BS512).